Consider the following 1006-residue polypeptide: uncharacterized protein (1006 aa).

The segment at 326 to 371 (EMEKKRPRSPELVPKKIVMEKERPSSPDSEAEEREHNLRIEKERHQ) is disordered. Basic and acidic residues-rich tracts occupy residues 338 to 350 (VPKK…ERPS) and 358 to 371 (EREH…ERHQ). Coiled coils occupy residues 358–473 (EREH…ARLA) and 756–782 (EVQK…AFGR).

This is an uncharacterized protein from Caenorhabditis elegans.